We begin with the raw amino-acid sequence, 1235 residues long: Stress response protein NST1 (1235 aa).

Positions 1–19 (MPSNSKRSMAPPTNVSKQI) are enriched in polar residues. Disordered regions lie at residues 1-210 (MPSN…AHKV), 300-369 (FENG…LEDA), 416-480 (RMQR…EQRM), 517-848 (EELE…IPAM), 904-987 (GHTS…NQQE), 1001-1023 (LDDS…LPPG), and 1186-1235 (EPDN…TTGF). Positions 20–34 (SATSTSKKAPTKPTT) are enriched in low complexity. Positions 35-52 (QNSIAGAKSTGSPETRTS) are enriched in polar residues. 2 stretches are compositionally biased toward basic residues: residues 70–80 (NRKKQKRRQKQ) and 159–171 (RKGK…KSRS). The segment covering 179-189 (SSTSMSTPSAS) has biased composition (low complexity). A compositionally biased stretch (acidic residues) spans 340-367 (LPDDDEDLDDDYDEDDEDDEPYSEDELE). The span at 426–437 (AAASAAHQSMHA) shows a compositional bias: low complexity. The span at 445–475 (LDEEEYDDEEEEDYDSQDDEEYEEDEMDAMT) shows a compositional bias: acidic residues. A coiled-coil region spans residues 502–714 (AYREKIARER…QAAAVQAAKR (213 aa)). Basic and acidic residues-rich tracts occupy residues 517-539 (EELE…EAQK) and 549-697 (QAKE…REEQ). Residues 698-715 (AAQQAAAQAAAVQAAKRA) show a composition bias toward low complexity. Polar residues-rich tracts occupy residues 759 to 772 (QPSQ…SPRS), 779 to 794 (ISQT…STTI), 831 to 843 (PMQS…TNPG), and 924 to 959 (APQS…SQPI). The span at 1188–1198 (DNNSISSSTRG) shows a compositional bias: polar residues. A compositionally biased stretch (low complexity) spans 1206–1221 (GSPVPGSSLPTPGSGS). A compositionally biased stretch (polar residues) spans 1222-1235 (RQFATTNISPTTGF).

This sequence belongs to the NST1 family.

It localises to the cytoplasm. Its function is as follows. May act as a negative regulator of salt tolerance. The chain is Stress response protein NST1 (NST1) from Coccidioides immitis (strain RS) (Valley fever fungus).